The sequence spans 407 residues: L-cysteine:1D-myo-inositol 2-amino-2-deoxy-alpha-D-glucopyranoside ligase (407 aa).

Residue C43 coordinates Zn(2+). Residues 43–46 (CGIT), T58, and 81–83 (NAT) contribute to the L-cysteinyl-5'-AMP site. Positions 45–55 (ITPYDATHLGH) match the 'HIGH' region motif. The 'ERGGDP' region motif lies at 183 to 188 (QRGGDP). Residue W223 coordinates L-cysteinyl-5'-AMP. Zn(2+) is bound at residue C227. An L-cysteinyl-5'-AMP-binding site is contributed by 245–247 (GSD). Position 252 (H252) interacts with Zn(2+). L-cysteinyl-5'-AMP is bound at residue V279. The 'KMSKS' region motif lies at 285-289 (KMSKS).

The protein belongs to the class-I aminoacyl-tRNA synthetase family. MshC subfamily. In terms of assembly, monomer. Zn(2+) is required as a cofactor.

It catalyses the reaction 1D-myo-inositol 2-amino-2-deoxy-alpha-D-glucopyranoside + L-cysteine + ATP = 1D-myo-inositol 2-(L-cysteinylamino)-2-deoxy-alpha-D-glucopyranoside + AMP + diphosphate + H(+). In terms of biological role, catalyzes the ATP-dependent condensation of GlcN-Ins and L-cysteine to form L-Cys-GlcN-Ins. The protein is L-cysteine:1D-myo-inositol 2-amino-2-deoxy-alpha-D-glucopyranoside ligase of Streptosporangium roseum (strain ATCC 12428 / DSM 43021 / JCM 3005 / KCTC 9067 / NCIMB 10171 / NRRL 2505 / NI 9100).